Consider the following 1182-residue polypeptide: CRISPR-associated endoribonuclease Cas13a (1182 aa).

Residues 132-279 are a coiled coil; sequence FNNLIEKVQN…ENNSDNKLKQ (148 aa). Residues 366-508 are HEPN-like fold 1; sequence YIKNTGQLET…NNEEIKGYFI (143 aa). Residues 896 to 955 adopt a coiled-coil conformation; it reads KVEKENIEDYNKKEEIEQKKKSNIEKLQDLKVELHKKWEQNKITEKEIEKYNNTTRKINE. The interval 965–1120 is HEPN-like fold 2; sequence LQNVYLLHEM…QNHILKSTKT (156 aa).

The protein belongs to the CRISPR-associated endoribonuclease Cas13a family. A divalent metal cation is required as a cofactor.

Its activity is regulated as follows. Target RNA acts as an activator for non-specific ssRNA degradation. In terms of biological role, CRISPR (clustered regularly interspaced short palindromic repeat), is an adaptive immune system that provides protection against mobile genetic elements (viruses, transposable elements and conjugative plasmids). CRISPR clusters contain sequences complementary to antecedent mobile elements and target invading nucleic acids. Unlike many single-component effectors, this CRISPR-Cas system targets RNA. CRISPR clusters are transcribed from pre-CRISPR RNA (crRNA) and processed into crRNA by this protein. Cleaves linear target ssRNA in a pre-crRNA-dependent fashion, preferentially before U residues. Binding a viable target RNA target activates this protein for non-specific RNA degradation in vitro (called collateral RNA degradation), which is fairly sensitive as it requires picomolar levels of viable target RNA. The sequence is that of CRISPR-associated endoribonuclease Cas13a from Leptotrichia wadei (strain F0279).